A 406-amino-acid polypeptide reads, in one-letter code: Phosphorylase b kinase gamma catalytic chain, liver/testis isoform (406 aa).

In terms of domain architecture, Protein kinase spans Y24 to F291. ATP contacts are provided by residues I30–V38 and K53. D153 serves as the catalytic Proton acceptor. A calmodulin-binding (domain-N) region spans residues Q306–P330. A Phosphoserine modification is found at S345. The segment at V346–R370 is calmodulin-binding (domain-C).

This sequence belongs to the protein kinase superfamily. CAMK Ser/Thr protein kinase family. As to quaternary structure, hexadecamer of 4 heterotetramers, each composed of alpha, beta, gamma, and delta subunits. Alpha (PHKA1 or PHKA2) and beta (PHKB) are regulatory subunits, gamma (PHKG1 or PHKG2) is the catalytic subunit, and delta is calmodulin.

The catalysed reaction is 2 ATP + phosphorylase b = 2 ADP + phosphorylase a.. Functionally, catalytic subunit of the phosphorylase b kinase (PHK), which mediates the neural and hormonal regulation of glycogen breakdown (glycogenolysis) by phosphorylating and thereby activating glycogen phosphorylase. May regulate glycogeneolysis in the testis. In vitro, phosphorylates PYGM. The sequence is that of Phosphorylase b kinase gamma catalytic chain, liver/testis isoform (PHKG2) from Homo sapiens (Human).